An 834-amino-acid polypeptide reads, in one-letter code: Probable basic-leucine zipper transcription factor D (834 aa).

The disordered stretch occupies residues 83–160; sequence NNNNMLNDHS…SNNNSSSEGE (78 aa). Residues 90–111 show a composition bias toward polar residues; it reads DHSSSPMRVPNSSPSLYNNSIE. Over residues 119–157 the composition is skewed to low complexity; it reads DNSNNNNNNNNNINVNDINVNDINSNSTNNNESNNNSSS. Residues 211 to 246 adopt a coiled-coil conformation; sequence SEQQQQQQQQQQQQQQQQQQQQQQQQQHQHLLQEHQ. A disordered region spans residues 378–405; the sequence is VVDPPTHNQEDERNVKKQRRLIKNRESA. Residues 391–454 enclose the bZIP domain; it reads NVKKQRRLIK…KQLAAQNSNS (64 aa). The tract at residues 393–402 is basic motif; the sequence is KKQRRLIKNR. The tract at residues 407-414 is leucine-zipper; the sequence is LSRMRKKI. 2 disordered regions span residues 455 to 504 and 550 to 712; these read NNNS…QQQS and LSMS…KTPQ. The segment covering 550 to 595 has biased composition (polar residues); the sequence is LSMSDSESSPQKSLRLSSNHHSLPDGTFNTIPIDQQTTATTNTKSL. 2 stretches are compositionally biased toward low complexity: residues 616–651 and 694–707; these read NNNNNNNNNNNNNNNNNNNNNNNNNNNNNNNNNNNN and TTTTTTTTTTTTST.

The protein belongs to the bZIP family.

It is found in the nucleus. Functionally, probable transcriptional regulator. This is Probable basic-leucine zipper transcription factor D (bzpD) from Dictyostelium discoideum (Social amoeba).